A 280-amino-acid chain; its full sequence is 2,3,4,5-tetrahydropyridine-2,6-dicarboxylate N-succinyltransferase (280 aa).

Belongs to the transferase hexapeptide repeat family.

It is found in the cytoplasm. It carries out the reaction (S)-2,3,4,5-tetrahydrodipicolinate + succinyl-CoA + H2O = (S)-2-succinylamino-6-oxoheptanedioate + CoA. It participates in amino-acid biosynthesis; L-lysine biosynthesis via DAP pathway; LL-2,6-diaminopimelate from (S)-tetrahydrodipicolinate (succinylase route): step 1/3. This Methylorubrum extorquens (strain PA1) (Methylobacterium extorquens) protein is 2,3,4,5-tetrahydropyridine-2,6-dicarboxylate N-succinyltransferase.